Reading from the N-terminus, the 229-residue chain is DNA mismatch repair protein MutH (229 aa).

The protein belongs to the MutH family.

It is found in the cytoplasm. Sequence-specific endonuclease that cleaves unmethylated GATC sequences. It is involved in DNA mismatch repair. This Shigella flexneri protein is DNA mismatch repair protein MutH.